Here is a 343-residue protein sequence, read N- to C-terminus: Dimethyladenosine transferase 1, mitochondrial (343 aa).

A mitochondrion-targeting transit peptide spans 1–27 (MAASGKLSTWRLPPLPTIREIIKLLRV). S-adenosyl-L-methionine contacts are provided by Leu38, Gly63, Glu85, Lys86, Asp111, Val112, and Asn141.

It belongs to the class I-like SAM-binding methyltransferase superfamily. rRNA adenine N(6)-methyltransferase family. KsgA subfamily. As to quaternary structure, interacts with mitochondrial RNA polymerase POLRMT. Interacts with TFAM. Bound to the maturing mtSSU until the late stages of assembly.

The protein localises to the mitochondrion. It catalyses the reaction adenosine(N)/adenosine(N+1) in rRNA + 4 S-adenosyl-L-methionine = N(6)-dimethyladenosine(N)/N(6)-dimethyladenosine(N+1) in rRNA + 4 S-adenosyl-L-homocysteine + 4 H(+). S-adenosyl-L-methionine-dependent methyltransferase which specifically dimethylates mitochondrial 12S rRNA at the conserved stem loop. Also required for basal transcription of mitochondrial DNA, probably via its interaction with POLRMT and TFAM. Stimulates transcription independently of the methyltransferase activity. Functionally, mitochondrial methyltransferase which uses S-adenosyl methionine to dimethylate two highly conserved adjacent adenosine residues (A1583 and A1584) within the loop of helix 45 at the 3-prime end of 12S rRNA, thereby regulating the assembly or stability of the small subunit of the mitochondrial ribosome. Also required for basal transcription of mitochondrial DNA, probably via its interaction with POLRMT and TFAM. Stimulates transcription independently of the methyltransferase activity. In Pongo abelii (Sumatran orangutan), this protein is Dimethyladenosine transferase 1, mitochondrial (TFB1M).